The primary structure comprises 171 residues: Protein TIFY 11d (171 aa).

A Tify domain is found at 65 to 100 (PSAGTAPLTIFYDGRMVVVDDVPAEKAAELMRLAGS). The Jas signature appears at 117 to 142 (PIARKASLQRFLQKRKHRITTTSEPY). Positions 119-126 (ARKASLQR) match the Nuclear localization signal motif.

Belongs to the TIFY/JAZ family. As to quaternary structure, interacts with BHLH148 and COI1A. Interacts with COI1A, COI1B and COI2 in a coronatine-dependent manner. Coronatine is an analog of jasmonoyl isoleucine (JA-Ile). In terms of processing, ubiquitinated. Increase in jasmonoyl isoleucine (JA-Ile) levels mediates its degradation via COI1A-mediated proteasome pathway.

The protein localises to the nucleus. Its function is as follows. Repressor of jasmonate (JA) responses. May act on an initial response of JA-regulated gene expression toward drought tolerance as part of a BHLH148-TIFY11D/JAZ12-COI1A complex. The polypeptide is Protein TIFY 11d (Oryza sativa subsp. indica (Rice)).